Consider the following 935-residue polypeptide: UvrABC system protein A (935 aa).

G31–S38 lines the ATP pocket. A C4-type zinc finger spans residues C254–C281. ABC transporter domains are found at residues I310–S579 and K599–A931. G631–S638 is a binding site for ATP. The C4-type zinc-finger motif lies at C731–C757.

This sequence belongs to the ABC transporter superfamily. UvrA family. In terms of assembly, forms a heterotetramer with UvrB during the search for lesions.

The protein resides in the cytoplasm. The UvrABC repair system catalyzes the recognition and processing of DNA lesions. UvrA is an ATPase and a DNA-binding protein. A damage recognition complex composed of 2 UvrA and 2 UvrB subunits scans DNA for abnormalities. When the presence of a lesion has been verified by UvrB, the UvrA molecules dissociate. The polypeptide is UvrABC system protein A (Helicobacter pylori (strain ATCC 700392 / 26695) (Campylobacter pylori)).